The chain runs to 606 residues: Gamma-aminobutyric acid receptor subunit beta (606 aa).

Residues 1-44 (MSDSKMDKLARMAPLPRTPLLTIWLAINMALIAQETGHKRIHTV) form the signal peptide. Topologically, residues 45 to 268 (QAATGGGSML…CEIQFVRSMG (224 aa)) are extracellular. N58 carries an N-linked (GlcNAc...) asparagine glycan. C185 and C199 are oxidised to a cystine. N253 carries N-linked (GlcNAc...) asparagine glycosylation. The next 3 helical transmembrane spans lie at 269-291 (YYLI…SFWL), 297-316 (PARV…LMSS), and 333-356 (YLGT…YMAK). The Cytoplasmic portion of the chain corresponds to 357–568 (RIQMRKQRFM…LGITPSDIDK (212 aa)). 2 disordered regions span residues 376–451 (KQQL…VSNR) and 482–542 (HDPK…AAVP). Residues 381–395 (GANQQQANPNPNANV) show a composition bias toward low complexity. Gly residues predominate over residues 396-425 (GGPGGVGVGPGGPGGPGGGVNVGVGMGMGP). The segment covering 430-443 (GHGHHAHSHGHPHA) has biased composition (basic residues). The segment covering 499 to 536 (GGRGGPQSHGPGPGQGGGPPGGGGGGGGGGGPPEGGGD) has biased composition (gly residues). The helical transmembrane segment at 569–590 (YSRIVFPVCFVCFNLMYWIIYL) threads the bilayer.

The protein belongs to the ligand-gated ion channel (TC 1.A.9) family. Gamma-aminobutyric acid receptor (TC 1.A.9.5) subfamily. As to quaternary structure, forms oligomers. Interacts with Nlg4; the interaction mediates Rdl clustering. Interacts with Fbxl4; the interaction mediates Rdl degradation. Expressed in different parts of the brain: the mushroom bodies (alpha, alpha', beta, beta', gamma lobes and peduncles), the neurons projecting to the columnar-type neuron LC9 optic glomerulus, in interneurons connecting the paired olfactory lobes, antennal lobes, PDF-expressing small and large ventral lateral neurons (LNvs) of the circadian clock and lobula columnar neuron 11 (LC11) (at protein level). Expressed in all major ON pathway medulla neurons (Mi1, Tm3, Mi4, and Mi9) and in OFF pathway neurons (Tm1, Tm2, Tm4, and Tm9).

It localises to the cell membrane. It is found in the postsynaptic cell membrane. The protein localises to the cell projection. The protein resides in the dendrite. Its subcellular location is the axon. With respect to regulation, activated by agonist muscimol. Insensitive to zinc, glycine, glutamate, and baclofen, loreclezole, to antagonist bicuculline, glycine-receptor antagonist strychnine, and nonselective GABA and glycine antagonist RU 5135. Insensitive to flunitrazepam, pentobarbitone or pregnane steroids such as 5alpha-pregnan-3alpha-ol-20-one. Inhibited by insecticides picrotoxin (PTX), cyclodiene dieldrin, TBPS and lindane. Inhibited by ivermectin, fipronil and pyrafluprole. Its activity is regulated as follows. Inhibited by insecticides picrotoxin (PTX). Functionally, gamma-aminobutyric acid (GABA) receptor voltage channel subunit. GABA, an inhibitory neurotransmitter, mediates neuronal inhibition by binding to the GABA receptor and opening an integral chloride channel. Together with glutamate receptor GluClalpha, plays an important role in the visual response by regulating the activity of ON/OFF-selective neurons. Plays a role in promoting sleep and sleep latency by regulating the activity of peptidergic PDF neurons. In large ventral lateral clock neurons, clustering is mediated by Nlg4 and protein levels undergo daily degradation in response to the circadian clock. In neurons in the mushroom bodies, has a role in odor memory acquisition where it inhibits appetitive and aversive olfactory learning, probably upstream of Adcy1/adenylate cyclase 1 and GTPase activating protein Nf1. In male-specific GABAergic neurons, plays a role in inhibiting male aggressive behavior during courtship. In terms of biological role, gamma-aminobutyric acid (GABA) receptor voltage channel subunit. The chain is Gamma-aminobutyric acid receptor subunit beta (Rdl) from Drosophila melanogaster (Fruit fly).